The chain runs to 346 residues: UDP-N-acetylenolpyruvoylglucosamine reductase (346 aa).

An FAD-binding PCMH-type domain is found at L18–H189. Residue R165 is part of the active site. S240 serves as the catalytic Proton donor. The active site involves E336.

Belongs to the MurB family. Requires FAD as cofactor.

The protein localises to the cytoplasm. It catalyses the reaction UDP-N-acetyl-alpha-D-muramate + NADP(+) = UDP-N-acetyl-3-O-(1-carboxyvinyl)-alpha-D-glucosamine + NADPH + H(+). It participates in cell wall biogenesis; peptidoglycan biosynthesis. Its function is as follows. Cell wall formation. This is UDP-N-acetylenolpyruvoylglucosamine reductase from Neisseria meningitidis serogroup B (strain ATCC BAA-335 / MC58).